Reading from the N-terminus, the 581-residue chain is Pyridine nucleotide-disulfide oxidoreductase domain-containing protein 2 (581 aa).

38–71 is a binding site for FAD; the sequence is VVIGAGHNGLVAAAYLQRLGVNTAVFERRHVIGG.

The protein belongs to the carotenoid/retinoid oxidoreductase family. In terms of assembly, interacts with COX5B; this interaction may contribute to localize PYROXD2 to the inner face of the inner mitochondrial membrane.

The protein resides in the mitochondrion matrix. In terms of biological role, probable oxidoreductase that may play a role as regulator of mitochondrial function. This Rattus norvegicus (Rat) protein is Pyridine nucleotide-disulfide oxidoreductase domain-containing protein 2.